A 471-amino-acid polypeptide reads, in one-letter code: FAD-linked oxidoreductase sorD (471 aa).

The signal sequence occupies residues 1 to 23; that stretch reads MQAASAFATCLLASVGGNSSAVA. Asn-18, Asn-29, Asn-174, Asn-279, and Asn-351 each carry an N-linked (GlcNAc...) asparagine glycan. In terms of domain architecture, FAD-binding PCMH-type spans 41–212; the sequence is LLTTPSAIVW…TDFSIRTEPV (172 aa).

The protein belongs to the oxygen-dependent FAD-linked oxidoreductase family. It depends on FAD as a cofactor.

It participates in secondary metabolite biosynthesis. FAD-linked oxidoreductase; part of the gene cluster that mediates the biosynthesis of sorbicillinoids, a diverse group of yellow secondary metabolites that restrict growth of competing pathogenic fungi but not of bacteria. Sorbicillinoids biosynthesis requires the action of two PKSs. SorA iteratively combines three acetyl units and the growing chain is modified by the ketoacyl reductase subunit, and optional by the enoyl reductase subunit in the second cycle. The polyketide is then handed over to the PKS SorB, which adds three more acetyl units, and two methyl groups. SorB releases an aldehyde, which undergoes spontaneous cyclization resulting in the formation of sorbicillin or 2',3'-dihydrosorbicillin. The monooxygenase sorC oxidizes sorbicillin and 2',3'-dihydrosorbicillin to 2',3'-dihydrosorbicillinol and sorbicillinol, respectively. The oxidoreductase sorD further converts sorbicillinol into oxosorbicillinol. Sorbicillinol is the building block for the other sorbicillinoids such as disorbicillinol, bisvertinolon, and dihydrobisvertinolone. This is FAD-linked oxidoreductase sorD from Penicillium rubens (strain ATCC 28089 / DSM 1075 / NRRL 1951 / Wisconsin 54-1255) (Penicillium chrysogenum).